Reading from the N-terminus, the 204-residue chain is NAD(P)H dehydrogenase (quinone) FQR1 (204 aa).

Positions 5–192 constitute a Flavodoxin-like domain; sequence VYIVYYSMYG…QQAFHQGQYI (188 aa). FMN-binding positions include 11 to 15, 112 to 165, and histidine 136; these read SMYGH and IFYS…SPYG. Tyrosine 13 lines the NAD(+) pocket.

The protein belongs to the WrbA family. It depends on FMN as a cofactor.

It is found in the cell membrane. The catalysed reaction is a quinone + NADH + H(+) = a quinol + NAD(+). It carries out the reaction a quinone + NADPH + H(+) = a quinol + NADP(+). Catalyzes the transfer of electrons from NADH and NADPH to several quinones in vitro. May act as detoxification enzyme, and protect against auxin-induced oxidative stress. The polypeptide is NAD(P)H dehydrogenase (quinone) FQR1 (Arabidopsis thaliana (Mouse-ear cress)).